The following is a 439-amino-acid chain: Xylose isomerase (439 aa).

Catalysis depends on residues H101 and D104. The Mg(2+) site is built by E232, E268, H271, D296, D307, D309, and D339.

It belongs to the xylose isomerase family. Homotetramer. Mg(2+) is required as a cofactor.

It localises to the cytoplasm. It carries out the reaction alpha-D-xylose = alpha-D-xylulofuranose. This Actinobacillus pleuropneumoniae serotype 5b (strain L20) protein is Xylose isomerase.